Reading from the N-terminus, the 327-residue chain is Interleukin-12 subunit beta (327 aa).

Residues 1–22 form the signal peptide; it reads MCHQKLTISWFAMVLLVSPLMA. Residues 23 to 106 form the Ig-like C2-type domain; sequence IWELEKDVYV…LSHSRLLLHK (84 aa). The cysteines at positions 50 and 90 are disulfide-linked. 4 N-linked (GlcNAc...) asparagine glycosylation sites follow: Asn-125, Asn-135, Asn-223, and Asn-315. Residues 238-327 form the Fibronectin type-III domain; that stretch reads PPKNLQLKPL…WSEWASVSCN (90 aa).

This sequence belongs to the IL-12B family. In terms of assembly, heterodimer with IL12A; disulfide-linked. The heterodimer is known as interleukin IL-12. Heterodimer with IL23A; disulfide-linked. The heterodimer is known as interleukin IL-23. Also secreted as a monomer. Interacts with NBR1; this interaction promotes IL-12 secretion.

The protein resides in the secreted. Its function is as follows. Cytokine that can act as a growth factor for activated T and NK cells, enhance the lytic activity of NK/lymphokine-activated killer cells, and stimulate the production of IFN-gamma by resting PBMC. Associates with IL23A to form the IL-23 interleukin, a heterodimeric cytokine which functions in innate and adaptive immunity. IL-23 may constitute with IL-17 an acute response to infection in peripheral tissues. IL-23 binds to a heterodimeric receptor complex composed of IL12RB1 and IL23R, activates the Jak-Stat signaling cascade, stimulates memory rather than naive T-cells and promotes production of pro-inflammatory cytokines. IL-23 induces autoimmune inflammation and thus may be responsible for autoimmune inflammatory diseases and may be important for tumorigenesis. The chain is Interleukin-12 subunit beta (IL12B) from Sigmodon hispidus (Hispid cotton rat).